Consider the following 775-residue polypeptide: Lon protease (775 aa).

The Lon N-terminal domain occupies 6–207 (LPLMALRDIV…TIINILTSNI (202 aa)). Residue 356–363 (GPPGVGKT) participates in ATP binding. The region spanning 592–773 (NDQIGSTTGL…DQVLEHALTK (182 aa)) is the Lon proteolytic domain. Catalysis depends on residues serine 679 and lysine 722.

It belongs to the peptidase S16 family. Homohexamer. Organized in a ring with a central cavity.

It is found in the cytoplasm. It catalyses the reaction Hydrolysis of proteins in presence of ATP.. ATP-dependent serine protease that mediates the selective degradation of mutant and abnormal proteins as well as certain short-lived regulatory proteins. Required for cellular homeostasis and for survival from DNA damage and developmental changes induced by stress. Degrades polypeptides processively to yield small peptide fragments that are 5 to 10 amino acids long. Binds to DNA in a double-stranded, site-specific manner. In Rickettsia bellii (strain RML369-C), this protein is Lon protease.